A 272-amino-acid chain; its full sequence is Endoplasmic reticulum resident protein 27 (272 aa).

The N-terminal stretch at 1–25 (MKITRSRCLILSFVLVCGLVPEVTA) is a signal peptide. Residues 39-152 (EPIWLTDVPA…WVTEYSPMIA (114 aa)) enclose the Thioredoxin domain. 2 N-linked (GlcNAc...) asparagine glycosylation sites follow: Asn91 and Asn100. The interval 230 to 233 (DKWD) is PDIA3-binding site. Positions 269–272 (KEEL) match the Prevents secretion from ER motif.

This sequence belongs to the protein disulfide isomerase family. Interacts with PDIA3.

Its subcellular location is the endoplasmic reticulum lumen. Functionally, specifically binds unfolded proteins and may recruit protein disulfide isomerase PDIA3 to unfolded substrates. Binds protein substrates via a hydrophobic pocket in the C-terminal domain. May play a role in the unfolded stress response. The chain is Endoplasmic reticulum resident protein 27 (Erp27) from Mus musculus (Mouse).